A 217-amino-acid chain; its full sequence is MGQKTHPLGFRIGITRDHKSSWFSNMKSYPKLAQEDYKIRSCIEKQLHNASISLIYIDRKVDQVQVHIHTARPGIILGKMGRGLEDLRKKLETTLKNDTQIRINLIEITDPDKEATLIAEFIVQQLEKRIAFRRVIRQAMQRSQKAKNQGIKIQVSGRLNGAEIARSEWVREGRVPLQTLRAHIDYSYKTAHTIYGILGVKVWLFKGEKIITDKVDN.

One can recognise a KH type-2 domain in the interval 39–109 (IRSCIEKQLH…QIRINLIEIT (71 aa)).

It belongs to the universal ribosomal protein uS3 family. Part of the 30S ribosomal subunit.

Its subcellular location is the plastid. It is found in the chloroplast. This Gracilaria tenuistipitata var. liui (Red alga) protein is Small ribosomal subunit protein uS3c (rps3).